Reading from the N-terminus, the 146-residue chain is MNPAHLLILAAVCVSPLGAFSNRPMPLNLYQFKNMIQCTVPNRSWWDFADYGCYCGRGGSGTPVDDLDRCCQVHDNCYNEAEKISRCWPYFKTYSYECSQGTLTCKGDNDACAAAVCDCDRLAAICFAGAPYNNNNYNIDLKARCQ.

A signal peptide spans 1-21 (MNPAHLLILAAVCVSPLGAFS). Positions 22–27 (NRPMPL) are excised as a propeptide. 7 cysteine pairs are disulfide-bonded: Cys-38-Cys-98, Cys-53-Cys-145, Cys-55-Cys-71, Cys-70-Cys-126, Cys-77-Cys-119, Cys-87-Cys-112, and Cys-105-Cys-117. Ca(2+) contacts are provided by Tyr-54, Gly-56, and Gly-58. Residue His-74 is part of the active site. A Ca(2+)-binding site is contributed by Asp-75. Residue Asp-120 is part of the active site.

The protein belongs to the phospholipase A2 family. Group I subfamily. D49 sub-subfamily. Requires Ca(2+) as cofactor. Expressed by the venom gland.

The protein resides in the secreted. It catalyses the reaction a 1,2-diacyl-sn-glycero-3-phosphocholine + H2O = a 1-acyl-sn-glycero-3-phosphocholine + a fatty acid + H(+). PLA2 catalyzes the calcium-dependent hydrolysis of the 2-acyl groups in 3-sn-phosphoglycerides. Is able to suppress the acetylcholine (ACh)-evoked current mediated by alpha-7 (CHRNA7)-similar nAChRs in L.stagnalis neurons (IC(50)=37 nM) and to compete with alpha-bungarotoxin for binding to muscle- and alpha-7 neuronal nAChR types, as well as to AChBPs. In inhibition of alpha-bungarotoxin binding, this toxin is similarly active against T.californica nAChR (IC(50)=1.2 uM), human alpha-7 nAChR (IC(50)=3.2 uM), and L.stagnalis AChBP (IC(50)=1.0 uM), whereas it is not active against A.californica AChBP (IC(50)&gt;100 uM). In Naja kaouthia (Monocled cobra), this protein is Acidic phospholipase A2 CM-II.